Here is a 317-residue protein sequence, read N- to C-terminus: Neuroguidin-A (317 aa).

2 disordered regions span residues 125-170 (ENDP…SKVK) and 280-317 (SALTGGEGRAEDMVPSMKKSKKGPKKSKKKKGFSRRRH). Over residues 146–157 (DERESDSGEEGA) the composition is skewed to acidic residues. The segment covering 297–317 (KKSKKGPKKSKKKKGFSRRRH) has biased composition (basic residues).

This sequence belongs to the SAS10 family. As to quaternary structure, part of the small subunit (SSU) processome, composed of more than 70 proteins and the RNA chaperone small nucleolar RNA (snoRNA) U3.

It localises to the nucleus. The protein localises to the nucleolus. The protein resides in the chromosome. Its subcellular location is the centromere. It is found in the cytoplasm. It localises to the cell projection. The protein localises to the axon. The protein resides in the dendrite. Its subcellular location is the filopodium. In terms of biological role, part of the small subunit (SSU) processome, first precursor of the small eukaryotic ribosomal subunit. During the assembly of the SSU processome in the nucleolus, many ribosome biogenesis factors, an RNA chaperone and ribosomal proteins associate with the nascent pre-rRNA and work in concert to generate RNA folding, modifications, rearrangements and cleavage as well as targeted degradation of pre-ribosomal RNA by the RNA exosome. Its dissociation from the complex determines the transition from state pre-A1 to state pre-A1*. May inhibit mRNA translation. This is Neuroguidin-A (ngdn-a) from Xenopus laevis (African clawed frog).